Consider the following 66-residue polypeptide: Beta-defensin 107A (66 aa).

The N-terminal stretch at 1-22 (MKIFFFIFAALILLAQIFQART) is a signal peptide. Disulfide bonds link C37–C51 and C41–C60.

Belongs to the beta-defensin family.

It localises to the secreted. Functionally, has antibacterial activity. In Hylobates lar (Lar gibbon), this protein is Beta-defensin 107A (DEFB107A).